The following is a 357-amino-acid chain: Snake venom metalloproteinase H4 (357 aa).

The first 6 residues, 1 to 6 (FPYQGS), serve as a signal peptide directing secretion. Positions 7-176 (SIMLESGKVN…KKASQLIVST (170 aa)) are excised as a propeptide. Positions 180–357 (RYMEIVIVVD…EVIKYFLDSK (178 aa)) constitute a Peptidase M12B domain. Residue H316 coordinates Zn(2+). E317 is an active-site residue. Residues H320 and H326 each contribute to the Zn(2+) site. A disulfide bridge links C333 with C339.

Belongs to the venom metalloproteinase (M12B) family. P-I subfamily. As to quaternary structure, monomer. Zn(2+) is required as a cofactor. As to expression, expressed by the venom gland.

It localises to the secreted. Snake venom metalloproteinase that impairs hemostasis in the envenomed animal. The chain is Snake venom metalloproteinase H4 from Deinagkistrodon acutus (Hundred-pace snake).